Reading from the N-terminus, the 173-residue chain is Galactose-6-phosphate isomerase subunit LacB (173 aa).

The protein belongs to the LacAB/RpiB family. In terms of assembly, heteromultimeric protein consisting of LacA and LacB.

It catalyses the reaction aldehydo-D-galactose 6-phosphate = keto-D-tagatose 6-phosphate. The protein operates within carbohydrate metabolism; D-galactose 6-phosphate degradation; D-tagatose 6-phosphate from D-galactose 6-phosphate: step 1/1. This is Galactose-6-phosphate isomerase subunit LacB from Clostridium acetobutylicum (strain ATCC 824 / DSM 792 / JCM 1419 / IAM 19013 / LMG 5710 / NBRC 13948 / NRRL B-527 / VKM B-1787 / 2291 / W).